Consider the following 436-residue polypeptide: MLEALFRDSVEEAINDSIKEGVVLAVYNTARDDQWLKSWFKGDDVSLDTLAEHSIWLRLVKDTEQFQLFEQVFPNVVVPSIYLIRAGKIELIIQGEDDRHWEKLLACIGIKDKKAGESSSRETNPGLAREEKSSRDVHRKNARERIAETTLEIQRREQLKQRKLAEEERERIIRLVRADRAERKALDETHHRTLDDDKPLDVHDYIKDAQKLHSSKCVLQIRMTDGKTLKHEFNSSETLNDVRKWVDVNRTDGDCPYSFHRGIPRVTFKDSDELKTLETLELTPRSALLLKPLETQNSGLSVTGMEGPSLLGRLYKGFSTWWHNDKDPEVTSQREETSKPNRHEVRSSTPLSGAASSSCFQYNNVREPVQSSAHASPMLTPSGTRYPSETNLTTSRSVSPNVFQFVNNDHQEDPEDPTTFNGNNVHLEKKKDEDKK.

Residue Lys-19 forms a Glycyl lysine isopeptide (Lys-Gly) (interchain with G-Cter in ubiquitin) linkage. The tract at residues 115 to 141 (AGESSSRETNPGLAREEKSSRDVHRKN) is disordered. The UBX domain maps to 212-290 (LHSSKCVLQI…ELTPRSALLL (79 aa)). The span at 325-346 (DKDPEVTSQREETSKPNRHEVR) shows a compositional bias: basic and acidic residues. Disordered stretches follow at residues 325–357 (DKDP…AASS) and 371–436 (SSAH…EDKK). Low complexity predominate over residues 347–357 (SSTPLSGAASS). Polar residues predominate over residues 371 to 408 (SSAHASPMLTPSGTRYPSETNLTTSRSVSPNVFQFVNN). Ser-388 carries the phosphoserine modification. Residues 426–436 (HLEKKKDEDKK) are compositionally biased toward basic and acidic residues.

Interacts with CDC48.

It localises to the endoplasmic reticulum. In terms of biological role, involved in CDC48-dependent protein degradation through the ubiquitin/proteasome pathway. The protein is UBX domain-containing protein 7 (UBX7) of Saccharomyces cerevisiae (strain ATCC 204508 / S288c) (Baker's yeast).